Consider the following 339-residue polypeptide: METDIVVIGAGPVGIFTAFQAGMLDMRCHIIDVLDQAGGQCTALYPEKPIYDIPGYPVITAQKLIEQLMEQASPFEPVYHLSQRVEEIANNDSQSFIVVTSAGTKVKCKAIIIAAGNGIFEPNRPPLSGILEYENKSVFYNVNKISDFQDKIIVIAGGGDSAADWTVELSKVAKKIYVIHRRKEFRCVSETRNKLKLLESSGRIELVVPYQLHKLTGNDGQLSAVIIKNITSKEEKKISADFLLPFFGLSMDLGPIGSWDIQLERSRVVVDQATLRTSRDRIYAIGDVAAYLGKLKLILNGFAESTMACYDIYKVIHNSPVNFQYSTSKVVRGKKSDLL.

Residues Asp32, Gln40, Tyr45, Val85, Phe120, Asp287, and Thr327 each coordinate FAD.

It belongs to the ferredoxin--NADP reductase type 2 family. Homodimer. FAD serves as cofactor.

The enzyme catalyses 2 reduced [2Fe-2S]-[ferredoxin] + NADP(+) + H(+) = 2 oxidized [2Fe-2S]-[ferredoxin] + NADPH. This is Ferredoxin--NADP reductase from Wolbachia sp. subsp. Brugia malayi (strain TRS).